Reading from the N-terminus, the 378-residue chain is MKILIDNNIIFSYSLFKKIGKVNLINSIDINAKNISGFDALIIKSSTNVNENLLKNSNIKFIGSATSGKDHVDVDWLKKNKINFDFAPGCNSVAVAEYVFSSMLYFAYRDKFSLLKKTVGIVGFGNIGKCLNKKLSAIGVKTILCDPILEEKNNIKLKSLNEIVQNSDIITLHVPLTYSGKYPTWHLINKKILLDLKDNCILINTSRGSVIDNNSLLNILKEGKPIRVVLDVWENEPLICSKLLSLIDIGTPHIAGHSLEGKIKGTISIFNSLCNFVGKKNKKYFISSFIDPYEIEYISMKGRIDQSKIYLLSLLSNNILYDDHELRKNFNKKNCFVNLRNSYRKRREWSSLFIKSNNILFSNLLNKIGFNSKFFKEK.

Substrate contacts are provided by serine 45 and threonine 66. Aspartate 146 contacts NAD(+). Arginine 207 is a catalytic residue. Residue aspartate 231 participates in NAD(+) binding. The active site involves glutamate 236. The active-site Proton donor is histidine 253. Glycine 256 serves as a coordination point for NAD(+).

This sequence belongs to the D-isomer specific 2-hydroxyacid dehydrogenase family. PdxB subfamily. As to quaternary structure, homodimer.

Its subcellular location is the cytoplasm. The catalysed reaction is 4-phospho-D-erythronate + NAD(+) = (R)-3-hydroxy-2-oxo-4-phosphooxybutanoate + NADH + H(+). It functions in the pathway cofactor biosynthesis; pyridoxine 5'-phosphate biosynthesis; pyridoxine 5'-phosphate from D-erythrose 4-phosphate: step 2/5. Functionally, catalyzes the oxidation of erythronate-4-phosphate to 3-hydroxy-2-oxo-4-phosphonooxybutanoate. This chain is Erythronate-4-phosphate dehydrogenase, found in Wigglesworthia glossinidia brevipalpis.